The primary structure comprises 83 residues: Small ribosomal subunit protein bS16 (83 aa).

Belongs to the bacterial ribosomal protein bS16 family.

This is Small ribosomal subunit protein bS16 from Azotobacter vinelandii (strain DJ / ATCC BAA-1303).